A 1454-amino-acid chain; its full sequence is MESSSSDYYNKDNEEESLLANVASLRHELKITEWSLQSLGEELSSVSPSENSDYAPNPSRSEKLILDVQPSHPGLLNYSPYENVCKISGSSTDFQKKPRDKMFSSSAPVDQEIKSLREKLNKLRQQNACLVTQNHSLMTKFESIHFELTQSRAKVSMLESAQQQAASVPILEEQIINLEAEVSAQDKVLREAENKLEQSQKMVIEKEQSLQESKEECIKLKVDLLEQTKQGKRAERQRNEALYNAEELSKAFQQYKKKVAEKLEKVQAEEEILERNLTNCEKENKRLQERCGLYKSELEILKEKLRQLKEENNNGKEKLRIMAVKNSEVMAQLTESRQSILKLESELENKDEILRDKFSLMNENRELKVRVAAQNERLDLCQQEIESSRVELRSLEKIISQLPLKRELFGFKSYLSKYQMSSFSNKEDRCIGCCEANKLVISELRIKLAIKEAEIQKLHANLTANQLSQSLITCNDSQESSKLSSLETEPVKLGGHQVESVKDQNQHTMNKQYEKERQRLVTGIEELRTKLIQIEAENSDLKVNMAHRTSQFQLIQEELLEKASNSSKLESEMTKKCSQLLTLEKQLEEKIVAYSSIAAKNAELEQELMEKNEKIRSLETNINTEHEKICLAFEKAKKIHLEQHKEMEKQIERLEAQLEKKDQQFKEQEKTMSMLQQDIICKQHHLESLDRLLTESKGEMKKENMKKDEALKALQNQVSEETIKVRQLDSALEICKEELVLHLNQLEGNKEKFEKQLKKKSEEVYCLQKELKIKNHSLQETSEQNVILQHTLQQQQQMLQQETIRNGELEDTQTKLEKQVSKLEQELQKQRESSAEKLRKMEEKCESAAHEADLKRQKVIELTGTARQVKIEMDQYKEELSKMEKEIMHLKRDGENKAMHLSQLDMILDQTKTELEKKTNAVKELEKLQHSTETELTEALQKREVLETELQNAHGELKSTLRQLQELRDVLQKAQLSLEEKYTTIKDLTAELRECKMEIEDKKQELLEMDQALKERNWELKQRAAQVTHLDMTIREHRGEMEQKIIKLEGTLEKSELELKECNKQIESLNDKLQNAKEQLREKEFIMLQNEQEISQLKKEIERTQQRMKEMESVMKEQEQYIATQYKEAIDLGQELRLTREQVQNSHTELAEARHQQVQAQREIERLSSELEDMKQLSKEKDAHGNHLAEELGASKVREAHLEARMQAEIKKLSAEVESLKEAYHMEMISHQENHAKWKISADSQKSSVQQLNEQLEKAKLELEEAQDTVSNLHQQVQDRNEVIEAANEALLTKESELTRLQAKISGHEKAEDIKFLPAPFTSPTEIMPDVQDPKFAKCFHTSFSKCTKLRRSISASDLTFKIHGDEDLSEELLQDLKKMQLEQPSTLEESHKNLTYTQPDSFKPLTYNLEADSSENNDFNTLSGMLRYINKEVRLLKKSSMQTGAGLNQGENV.

Serine 45 carries the post-translational modification Phosphoserine. Coiled coils occupy residues 107 to 138 (APVDQEIKSLREKLNKLRQQNACLVTQNHSLM), 170 to 402 (ILEE…ISQL), 438 to 464 (KLVISELRIKLAIKEAEIQKLHANLTA), and 508 to 1309 (TMNK…SGHE). Residues 828-851 (QKQRESSAEKLRKMEEKCESAAHE) form a disordered region. Serine 1355 carries the phosphoserine modification.

The protein resides in the cytoplasm. Its subcellular location is the cytoskeleton. The protein localises to the microtubule organizing center. It is found in the centrosome. It localises to the centriolar satellite. In Homo sapiens (Human), this protein is Coiled-coil domain-containing protein 18 (CCDC18).